A 562-amino-acid polypeptide reads, in one-letter code: Pentatricopeptide repeat-containing protein At3g22670, mitochondrial (562 aa).

Residues M1–A31 constitute a mitochondrion transit peptide. PPR repeat units follow at residues S165–K199, T202–S232, D238–T268, D272–P306, D307–P341, N342–P376, D377–R411, D412–S446, N450–I484, and D485–P519.

The protein belongs to the PPR family. P subfamily.

Its subcellular location is the mitochondrion. In Arabidopsis thaliana (Mouse-ear cress), this protein is Pentatricopeptide repeat-containing protein At3g22670, mitochondrial.